The sequence spans 648 residues: Threonine--tRNA ligase (648 aa).

The TGS domain occupies 1–63; that stretch reads MSQISLTFPD…AASGRIAINT (63 aa). Residues 247 to 544 are catalytic; the sequence is DHRKLGREME…LIENYSGKLP (298 aa). 3 residues coordinate Zn(2+): C344, H395, and H521.

It belongs to the class-II aminoacyl-tRNA synthetase family. As to quaternary structure, homodimer. The cofactor is Zn(2+).

The protein resides in the cytoplasm. It carries out the reaction tRNA(Thr) + L-threonine + ATP = L-threonyl-tRNA(Thr) + AMP + diphosphate + H(+). In terms of biological role, catalyzes the attachment of threonine to tRNA(Thr) in a two-step reaction: L-threonine is first activated by ATP to form Thr-AMP and then transferred to the acceptor end of tRNA(Thr). Also edits incorrectly charged L-seryl-tRNA(Thr). This chain is Threonine--tRNA ligase, found in Paracoccus denitrificans (strain Pd 1222).